The primary structure comprises 342 residues: Phosphate acyltransferase (342 aa).

Belongs to the PlsX family. Homodimer. Probably interacts with PlsY.

The protein localises to the cytoplasm. It carries out the reaction a fatty acyl-[ACP] + phosphate = an acyl phosphate + holo-[ACP]. Its pathway is lipid metabolism; phospholipid metabolism. In terms of biological role, catalyzes the reversible formation of acyl-phosphate (acyl-PO(4)) from acyl-[acyl-carrier-protein] (acyl-ACP). This enzyme utilizes acyl-ACP as fatty acyl donor, but not acyl-CoA. The chain is Phosphate acyltransferase from Shewanella loihica (strain ATCC BAA-1088 / PV-4).